We begin with the raw amino-acid sequence, 508 residues long: Drug efflux pump JefA (508 aa).

14 helical membrane-spanning segments follow: residues 9–29 (VLATGLGIFMVFVDVNIVNVA), 46–66 (WAVAGYSLGMAAVLMSCALLG), 75–95 (FVFGVTLFVVSSIVCVLPVSL), 104–124 (IQGLGAAFISVLSLALLSHSF), 136–156 (NWMAIGMVGAASAPALGGLMV), 163–183 (SVFLVNVPLGAIVWLLTLVGV), 194–214 (LDWVGQLTLIPAVALIAYTII), 222–242 (QSAGFVAALLLAAGVLLWLFV), 265–285 (SVLIVYFVVMSCFFGTLMVIT), 297–317 (LHAGLMMLPVPAGFGVASLLA), 328–348 (LPVLTCLAAMFIGLAIFAISM), 354–374 (VALVGLTIFGAGAGGCATPLL), 399–419 (LGGIFGVAFLGTIVAAWLGAA), and 479–499 (GIKLALGGAAVLLTGAFVLGW).

This sequence belongs to the major facilitator superfamily.

It is found in the cell inner membrane. Functionally, involved in resistance to ethambutol and isoniazid. The protein is Drug efflux pump JefA of Mycobacterium tuberculosis (strain CDC 1551 / Oshkosh).